A 300-amino-acid chain; its full sequence is Probable phytol kinase, chloroplastic (300 aa).

A chloroplast-targeting transit peptide spans 1 to 36; sequence MAAARPALPSSPTSLLLARSTSAPDLAARRPRRWLV. 7 helical membrane passes run 60–78, 98–118, 122–142, 168–188, 227–247, 254–274, and 276–296; these read LLRDGGATLLVTAGAYSLV, VVHVLSGVFFMASWPLFSNST, FFAAVVPFLNCVRLLTYGLGF, YVIVLLIIVLVFWRDSPIGIV, FISGFLLSALMLSYFSWLGYI, ALGKLVLVALAATVVECIPVT, and VVDDNISVPLATMLVAFLLFG.

Belongs to the polyprenol kinase family.

It localises to the plastid. The protein resides in the chloroplast membrane. The enzyme catalyses phytol + CTP = phytyl phosphate + CDP + H(+). It functions in the pathway cofactor biosynthesis; tocopherol biosynthesis. In terms of biological role, involved in the activation and reutilization of phytol from chlorophyll degradation in plant metabolism, including tocopherol biosynthesis. Catalyzes the conversion of phytol to phytol monophosphate (PMP). This chain is Probable phytol kinase, chloroplastic, found in Triticum aestivum (Wheat).